Reading from the N-terminus, the 518-residue chain is Putative succinate-semialdehyde dehydrogenase [NADP(+)] 2 (518 aa).

Residues 157–158 (WN), 181–184 (KPDS), and 232–233 (GS) contribute to the NADP(+) site. Residue glutamate 254 is the Proton acceptor of the active site. NADP(+) is bound at residue leucine 255. Cysteine 288 serves as the catalytic Nucleophile. Glutamate 386 contacts NADP(+).

The protein belongs to the aldehyde dehydrogenase family.

The catalysed reaction is succinate semialdehyde + NADP(+) + H2O = succinate + NADPH + 2 H(+). In terms of biological role, catalyzes the NADP(+)-dependent oxidation of succinate semialdehyde to succinate. Although it has succinate semialdehyde dehydrogenase activity, is likely to act physiologically on a different aldehyde(s). This Mycobacterium ulcerans (strain Agy99) protein is Putative succinate-semialdehyde dehydrogenase [NADP(+)] 2 (gabD2).